Reading from the N-terminus, the 309-residue chain is L-arabinose 1-dehydrogenase (NAD(P)(+)) (309 aa).

NADP(+)-binding positions include Ile-15 and 37 to 38 (SR). The Proton donor role is filled by Lys-91. Asp-169 contributes to the NADP(+) binding site.

This sequence belongs to the Gfo/Idh/MocA family. As to quaternary structure, monomer.

The catalysed reaction is alpha-L-arabinopyanose + NAD(+) = L-arabinono-1,4-lactone + NADH + H(+). The enzyme catalyses alpha-L-arabinopyanose + NADP(+) = L-arabinono-1,4-lactone + NADPH + H(+). It catalyses the reaction D-galactose + NAD(+) = D-galactono-1,4-lactone + NADH + H(+). It carries out the reaction D-galactose + NADP(+) = D-galactono-1,5-lactone + NADPH + H(+). The protein operates within carbohydrate degradation; L-arabinose degradation via L-arabinono-1,4-lactone pathway. In terms of biological role, catalyzes the NAD(P)(+)-dependent conversion of L-arabinose to L-arabino-gamma-lactone. Is involved in a degradation pathway of L-arabinose that allows A.brasilense to grow on L-arabinose as a sole carbon source. Prefers NADP(+) to NAD(+) as electron acceptor. Displays high catalytic efficiency for both L-arabinose and D-galactose in vitro. However, the enzyme appears to be involved in the metabolism of L-arabinose but not D-galactose in vivo. To a lesser extent, is also active on D-talose and D-xylose as substrates in vitro, but not with D-arabinose, D-glucose, D-ribose, L-xylose, L-mannose, L-lyxose, and D-fructose. In Azospirillum brasilense, this protein is L-arabinose 1-dehydrogenase (NAD(P)(+)) (araA).